A 365-amino-acid polypeptide reads, in one-letter code: Ribosomal RNA large subunit methyltransferase F (365 aa).

2 stretches are compositionally biased toward low complexity: residues 1-18 and 30-42; these read MPKP…SPAG and AKLK…AASK. The disordered stretch occupies residues 1–50; the sequence is MPKPAIKTAAKPATSPAGKRAKPNTPQSVAKLKASTAKAASKPKAKLGEK.

Belongs to the methyltransferase superfamily. METTL16/RlmF family.

It is found in the cytoplasm. It catalyses the reaction adenosine(1618) in 23S rRNA + S-adenosyl-L-methionine = N(6)-methyladenosine(1618) in 23S rRNA + S-adenosyl-L-homocysteine + H(+). Specifically methylates the adenine in position 1618 of 23S rRNA. This chain is Ribosomal RNA large subunit methyltransferase F, found in Shewanella oneidensis (strain ATCC 700550 / JCM 31522 / CIP 106686 / LMG 19005 / NCIMB 14063 / MR-1).